Reading from the N-terminus, the 229-residue chain is Isopentenyl-diphosphate delta-isomerase (229 aa).

Lysine 39 lines the substrate pocket. Residues histidine 43 and histidine 54 each contribute to the Mg(2+) site. One can recognise a Nudix hydrolase domain in the interval leucine 52 to leucine 202. Residues glutamine 72 and lysine 77 each contribute to the substrate site. Cysteine 89 is a catalytic residue. Serine 90 contacts substrate. Positions 152 and 154 each coordinate Mg(2+). Glutamate 154 is an active-site residue.

It belongs to the IPP isomerase type 1 family. The cofactor is Mg(2+).

Its subcellular location is the cytoplasm. It localises to the nucleus. The catalysed reaction is isopentenyl diphosphate = dimethylallyl diphosphate. It participates in isoprenoid biosynthesis; dimethylallyl diphosphate biosynthesis; dimethylallyl diphosphate from isopentenyl diphosphate: step 1/1. Functionally, isopentenyl-diphosphate delta-isomerase; part of the second module of ergosterol biosynthesis pathway that includes the middle steps of the pathway. Idi1 catalyzes the 1,3-allylic rearrangement of isopentenyl (IPP) to its highly electrophilic allylic isomer, dimethylallyl diphosphate (DMAPP). The second module is carried out in the vacuole and involves the formation of farnesyl diphosphate, which is also an important intermediate in the biosynthesis of ubiquinone, dolichol, heme and prenylated proteins. Activity by the mevalonate kinase erg12 first converts mevalonate into 5-phosphomevalonate. 5-phosphomevalonate is then further converted to 5-diphosphomevalonate by the phosphomevalonate kinase erg8. The diphosphomevalonate decarboxylase mvd1 then produces isopentenyl diphosphate. The isopentenyl-diphosphate delta-isomerase idi1 then catalyzes the 1,3-allylic rearrangement of the homoallylic substrate isopentenyl (IPP) to its highly electrophilic allylic isomer, dimethylallyl diphosphate (DMAPP). Finally the farnesyl diphosphate synthase fps1 catalyzes the sequential condensation of isopentenyl pyrophosphate with dimethylallyl pyrophosphate, and then with the resultant geranylpyrophosphate to the ultimate product farnesyl pyrophosphate. The chain is Isopentenyl-diphosphate delta-isomerase from Schizosaccharomyces pombe (strain 972 / ATCC 24843) (Fission yeast).